We begin with the raw amino-acid sequence, 695 residues long: DNA ligase (695 aa).

NAD(+) contacts are provided by residues 36–40, 85–86, and glutamate 123; these read DADYD and SL. Lysine 125 functions as the N6-AMP-lysine intermediate in the catalytic mechanism. The NAD(+) site is built by arginine 146, glutamate 182, lysine 318, and lysine 342. Zn(2+) contacts are provided by cysteine 436, cysteine 439, cysteine 454, and cysteine 460. Residues 617 to 695 form the BRCT domain; it reads LQSGDLAGKT…EDGLKALLSQ (79 aa).

The protein belongs to the NAD-dependent DNA ligase family. LigA subfamily. Mg(2+) is required as a cofactor. Mn(2+) serves as cofactor.

It carries out the reaction NAD(+) + (deoxyribonucleotide)n-3'-hydroxyl + 5'-phospho-(deoxyribonucleotide)m = (deoxyribonucleotide)n+m + AMP + beta-nicotinamide D-nucleotide.. DNA ligase that catalyzes the formation of phosphodiester linkages between 5'-phosphoryl and 3'-hydroxyl groups in double-stranded DNA using NAD as a coenzyme and as the energy source for the reaction. It is essential for DNA replication and repair of damaged DNA. The sequence is that of DNA ligase from Bordetella avium (strain 197N).